Consider the following 681-residue polypeptide: Potassium-transporting ATPase ATP-binding subunit (681 aa).

4 helical membrane passes run 30-50, 59-79, 216-236, and 255-275; these read LLVY…FFGI, LAIA…EAIA, ILLV…LPFT, and IALL…SIGI. D306 serves as the catalytic 4-aspartylphosphate intermediate. Residues D343, E347, 376-383, and K394 contribute to the ATP site; that span reads FTATTRMS. D517 and D521 together coordinate Mg(2+). The next 3 membrane-spanning stretches (helical) occupy residues 587–607, 615–635, and 661–681; these read FAII…LNLM, AILS…PLSL, and LIAP…LGIV.

It belongs to the cation transport ATPase (P-type) (TC 3.A.3) family. Type IA subfamily. In terms of assembly, the system is composed of three essential subunits: KdpA, KdpB and KdpC.

It is found in the cell membrane. It carries out the reaction K(+)(out) + ATP + H2O = K(+)(in) + ADP + phosphate + H(+). In terms of biological role, part of the high-affinity ATP-driven potassium transport (or Kdp) system, which catalyzes the hydrolysis of ATP coupled with the electrogenic transport of potassium into the cytoplasm. This subunit is responsible for energy coupling to the transport system and for the release of the potassium ions to the cytoplasm. The protein is Potassium-transporting ATPase ATP-binding subunit of Listeria monocytogenes serovar 1/2a (strain ATCC BAA-679 / EGD-e).